The primary structure comprises 253 residues: Sporulated oocyst TA4 antigen (253 aa).

Residues 1-23 form the signal peptide; it reads MARLSFVSLLSLSLLFGQQAVRA. The propeptide at 182 to 184 is removed in mature form; the sequence is RRL.

As to quaternary structure, the TA4 antigen is composed of a 17 kDa and a 8 kDa chain, linked by a disulfide bond.

The sequence is that of Sporulated oocyst TA4 antigen from Eimeria tenella (Coccidian parasite).